The primary structure comprises 173 residues: NADH-ubiquinone oxidoreductase chain 6 (173 aa).

A run of 4 helical transmembrane segments spans residues 24 to 44 (AMGL…GMFV), 47 to 67 (FWFS…LFIY), 81 to 101 (MKLF…SFFF), and 142 to 162 (LITL…VKIT).

The protein belongs to the complex I subunit 6 family.

The protein localises to the mitochondrion membrane. It carries out the reaction a ubiquinone + NADH + 5 H(+)(in) = a ubiquinol + NAD(+) + 4 H(+)(out). Core subunit of the mitochondrial membrane respiratory chain NADH dehydrogenase (Complex I) that is believed to belong to the minimal assembly required for catalysis. Complex I functions in the transfer of electrons from NADH to the respiratory chain. The immediate electron acceptor for the enzyme is believed to be ubiquinone. This chain is NADH-ubiquinone oxidoreductase chain 6, found in Aedes aegypti (Yellowfever mosquito).